The sequence spans 436 residues: 3-ketoacyl-CoA thiolase (436 aa).

The active-site Acyl-thioester intermediate is the cysteine 99. Active-site proton acceptor residues include histidine 392 and cysteine 422.

The protein belongs to the thiolase-like superfamily. Thiolase family. In terms of assembly, heterotetramer of two alpha chains (FadJ) and two beta chains (FadI).

It is found in the cytoplasm. It catalyses the reaction an acyl-CoA + acetyl-CoA = a 3-oxoacyl-CoA + CoA. It participates in lipid metabolism; fatty acid beta-oxidation. In terms of biological role, catalyzes the final step of fatty acid oxidation in which acetyl-CoA is released and the CoA ester of a fatty acid two carbons shorter is formed. In Salmonella newport (strain SL254), this protein is 3-ketoacyl-CoA thiolase.